Reading from the N-terminus, the 374-residue chain is Aminomethyltransferase (374 aa).

This sequence belongs to the GcvT family. The glycine cleavage system is composed of four proteins: P, T, L and H.

It catalyses the reaction N(6)-[(R)-S(8)-aminomethyldihydrolipoyl]-L-lysyl-[protein] + (6S)-5,6,7,8-tetrahydrofolate = N(6)-[(R)-dihydrolipoyl]-L-lysyl-[protein] + (6R)-5,10-methylene-5,6,7,8-tetrahydrofolate + NH4(+). Functionally, the glycine cleavage system catalyzes the degradation of glycine. In Prochlorococcus marinus (strain MIT 9313), this protein is Aminomethyltransferase.